Consider the following 337-residue polypeptide: DNA-directed RNA polymerase subunit alpha (337 aa).

Positions 1-233 (MIQKNWQELI…DQLALFINFK (233 aa)) are alpha N-terminal domain (alpha-NTD). Residues 249–337 (FNPALLKKVD…DLAKRYEDQY (89 aa)) form an alpha C-terminal domain (alpha-CTD) region.

It belongs to the RNA polymerase alpha chain family. As to quaternary structure, homodimer. The RNAP catalytic core consists of 2 alpha, 1 beta, 1 beta' and 1 omega subunit. When a sigma factor is associated with the core the holoenzyme is formed, which can initiate transcription.

The catalysed reaction is RNA(n) + a ribonucleoside 5'-triphosphate = RNA(n+1) + diphosphate. In terms of biological role, DNA-dependent RNA polymerase catalyzes the transcription of DNA into RNA using the four ribonucleoside triphosphates as substrates. This Bartonella henselae (strain ATCC 49882 / DSM 28221 / CCUG 30454 / Houston 1) (Rochalimaea henselae) protein is DNA-directed RNA polymerase subunit alpha.